The sequence spans 57 residues: uncharacterized protein (57 aa).

Residues 1–22 form the signal peptide; the sequence is MNEIIITIIVLILLLFITLSRN. Positions 26-57 form a coiled coil; sequence NNQSNNGKKEKLIKCKKEVQQLRQKLDQLTFQ.

This is an uncharacterized protein from Acheta domesticus (House cricket).